The chain runs to 247 residues: MLLLQALLFLLILPSHAEDDVTTTEELAPALVPPPKGTCAGWMAGIPGHPGHNGTPGRDGRDGTPGEKGEKGDAGLLGPKGETGDVGMTGAEGPRGFPGTPGRKGEPGEAAYVYRSAFSVGLETRVTVPNVPIRFTKIFYNQQNHYDGSTGKFYCNIPGLYYFSYHITVYMKDVKVSLFKKDKAVLFTYDQYQEKNVDQASGSVLLHLEVGDQVWLQVYGDGDHNGLYADNVNDSTFTGFLLYHDTN.

Positions 1–17 (MLLLQALLFLLILPSHA) are cleaved as a signal peptide. Residues Thr23 and Thr24 are each glycosylated (O-linked (GalNAc...) threonine). A 5-hydroxylysine modification is found at Lys36. Cys39 is subject to S-(2-succinyl)cysteine. A disordered region spans residues 44–105 (AGIPGHPGHN…GFPGTPGRKG (62 aa)). The region spanning 45 to 110 (GIPGHPGHNG…PGRKGEPGEA (66 aa)) is the Collagen-like domain. 4-hydroxyproline occurs at positions 47, 50, and 56. The segment covering 58–73 (RDGRDGTPGEKGEKGD) has biased composition (basic and acidic residues). 3 positions are modified to 5-hydroxylysine; alternate: Lys68, Lys71, and Lys80. Lys68, Lys71, and Lys80 each carry an O-linked (Gal...) hydroxylysine; alternate glycan. Position 94 is a 4-hydroxyproline (Pro94). Lys104 is modified (5-hydroxylysine; alternate). Lys104 carries an O-linked (Gal...) hydroxylysine; alternate glycan. The 137-residue stretch at 111-247 (AYVYRSAFSV…TGFLLYHDTN (137 aa)) folds into the C1q domain.

In terms of assembly, homomultimer. Forms trimers, hexamers and 12- to 18-mers. The trimers (low molecular weight complexes / LMW) are assembled via non-covalent interactions of the collagen-like domains in a triple helix and hydrophobic interactions within the globular C1q domain. Several trimers can associate to form disulfide-linked hexamers (middle molecular weight complexes / MMW) and larger complexes (higher molecular weight / HMW). The HMW-complex assembly is also modulated by the degree of lysine hydroxylation and glycosylation. LMW, MMW and HMW complexes bind to HBEGF, MMW and HMW complexes bind to PDGFB, and HMW complex binds to FGF2. Interacts with CTRP9 via the C1q domain (heterotrimeric complex). Post-translationally, HMW complexes are more extensively glycosylated than smaller oligomers. Hydroxylation and glycosylation of the lysine residues within the collagen-like domain of adiponectin seem to be critically involved in regulating the formation and/or secretion of HMW complexes and consequently contribute to the insulin-sensitizing activity of adiponectin in hepatocytes. In terms of processing, O-glycosylated. Not N-glycosylated O-linked glycans on hydroxylysine residues consist of Glc-Gal disaccharides bound to the oxygen atom of post-translationally added hydroxyl groups. O-linked glycosylation in the N-terminal is disialylated with the structure Neu5Acalpha2-&gt;8Neu5Acalpha2-&gt;3Gal. Sialylated by alpha 2,8-sialyltransferase III. Succination of Cys-39 by the Krebs cycle intermediate fumarate, which leads to S-(2-succinyl)cysteine residues, inhibits polymerization and secretion of adiponectin. Adiponectin is a major target for succination in both adipocytes and adipose tissue of diabetic mice. It was proposed that succination of proteins is a biomarker of mitochondrial stress and accumulation of Krebs cycle intermediates in adipose tissue in diabetes and that succination of adiponectin may contribute to the decrease in plasma adiponectin in diabetes. As to expression, synthesized exclusively by adipocytes and secreted into plasma.

It is found in the secreted. Polymerization and secretion of adiponectin is inhibited by succination of cysteine residues by the Krebs cycle intermediate fumarate, which leads to S-(2-succinyl)cysteine residues. Its function is as follows. Important adipokine involved in the control of fat metabolism and insulin sensitivity, with direct anti-diabetic, anti-atherogenic and anti-inflammatory activities. Stimulates AMPK phosphorylation and activation in the liver and the skeletal muscle, enhancing glucose utilization and fatty-acid combustion. Antagonizes TNF-alpha by negatively regulating its expression in various tissues such as liver and macrophages, and also by counteracting its effects. Inhibits endothelial NF-kappa-B signaling through a cAMP-dependent pathway. May play a role in cell growth, angiogenesis and tissue remodeling by binding and sequestering various growth factors with distinct binding affinities, depending on the type of complex, LMW, MMW or HMW. The protein is Adiponectin (Adipoq) of Mus musculus (Mouse).